Reading from the N-terminus, the 48-residue chain is Cathepsin B (48 aa).

The protein belongs to the peptidase C1 family. As to quaternary structure, dimer of a heavy chain and a light chain cross-linked by a disulfide bond.

The protein resides in the lysosome. It catalyses the reaction Hydrolysis of proteins with broad specificity for peptide bonds. Preferentially cleaves -Arg-Arg-|-Xaa bonds in small molecule substrates (thus differing from cathepsin L). In addition to being an endopeptidase, shows peptidyl-dipeptidase activity, liberating C-terminal dipeptides.. In terms of biological role, thiol protease which is believed to participate in intracellular degradation and turnover of proteins. Has also been implicated in tumor invasion and metastasis. The protein is Cathepsin B (CTSB) of Coturnix japonica (Japanese quail).